The primary structure comprises 232 residues: Glutathione S-transferase U10 (232 aa).

The GST N-terminal domain maps to serine 6 to proline 85. Residues serine 16 to threonine 17, asparagine 42 to lysine 43, lysine 56 to isoleucine 57, and glutamate 69 to serine 70 contribute to the glutathione site. The region spanning aspartate 91–leucine 226 is the GST C-terminal domain.

It belongs to the GST superfamily. Tau family.

It localises to the cytoplasm. It is found in the cytosol. It catalyses the reaction RX + glutathione = an S-substituted glutathione + a halide anion + H(+). In terms of biological role, may be involved in the conjugation of reduced glutathione to a wide number of exogenous and endogenous hydrophobic electrophiles and have a detoxification role against certain herbicides. The protein is Glutathione S-transferase U10 (GSTU10) of Arabidopsis thaliana (Mouse-ear cress).